The primary structure comprises 69 residues: DNA gyrase inhibitor YacG (69 aa).

Cys-7, Cys-10, Cys-26, and Cys-30 together coordinate Zn(2+).

Belongs to the DNA gyrase inhibitor YacG family. Interacts with GyrB. Zn(2+) serves as cofactor.

Functionally, inhibits all the catalytic activities of DNA gyrase by preventing its interaction with DNA. Acts by binding directly to the C-terminal domain of GyrB, which probably disrupts DNA binding by the gyrase. The protein is DNA gyrase inhibitor YacG of Shewanella sp. (strain W3-18-1).